The primary structure comprises 179 residues: Cytoglobin-2 (179 aa).

The segment covering 1-11 has biased composition (acidic residues); sequence MEKEREDEETE. The disordered stretch occupies residues 1 to 20; it reads MEKEREDEETEGRERPEPLT. One can recognise a Globin domain in the interval 18–167; that stretch reads PLTDVERGII…LYWHITGAYT (150 aa). Heme b contacts are provided by His81 and His113.

Belongs to the globin family. In terms of assembly, monomeric. Expressed in all tissues examined, with highest levels in brain and eye, and considerably lower levels in skin, gut, heart, gill, liver and muscle.

It is found in the cytoplasm. Its subcellular location is the nucleus. It catalyses the reaction Fe(II)-heme b-[protein] + nitric oxide + O2 = Fe(III)-heme b-[protein] + nitrate. It carries out the reaction Fe(III)-heme b-[protein] + nitric oxide + H2O = Fe(II)-heme b-[protein] + nitrite + 2 H(+). The catalysed reaction is 2 superoxide + 2 H(+) = H2O2 + O2. The enzyme catalyses H2O2 + AH2 = A + 2 H2O. Functionally, probable multifunctional globin with a hexacoordinated heme iron required for the catalysis of various reactions depending on redox condition of the cell as well as oxygen availability. Has a nitric oxide dioxygenase (NOD) activity and is most probably involved in cell-mediated and oxygen-dependent nitric oxide consumption. Under normoxic conditions functions as a nitric oxide dioxygenase (NOD) but under hypoxic conditions the globin may switch its function to that of a nitrite (NO2) reductase (NiR), generating nitric oxide. Could also have peroxidase and superoxide dismutase activities, detoxifying reactive oxygen species and protecting cells against oxidative stress. Also binds dioxygen with low affinity and could function as an oxygen sensor but has probably no function as a respiratory oxygen carrier. The polypeptide is Cytoglobin-2 (Danio rerio (Zebrafish)).